A 316-amino-acid polypeptide reads, in one-letter code: Nucleoside diphosphate-linked moiety X motif 6 (316 aa).

Positions 141–273 (SHQVGVAGAV…TSRVARLLLY (133 aa)) constitute a Nudix hydrolase domain. Residues 176–197 (GLSEPEEDIGDTAVREVFEETG) carry the Nudix box motif.

It belongs to the Nudix hydrolase family. As to quaternary structure, monomer and homodimer. In terms of tissue distribution, detected in liver, kidney and esophagus (at protein level). Ubiquitous.

It localises to the cytoplasm. Its subcellular location is the nucleus. The protein resides in the mitochondrion. In terms of biological role, may contribute to the regulation of cell proliferation. This chain is Nucleoside diphosphate-linked moiety X motif 6 (NUDT6), found in Homo sapiens (Human).